Reading from the N-terminus, the 215-residue chain is Cytochrome c biogenesis ATP-binding export protein CcmA (215 aa).

An ABC transporter domain is found at 3–215 (LEAENLAGER…MAAFSVEDIA (213 aa)). Residue 35–42 (GPNGSGKS) coordinates ATP.

Belongs to the ABC transporter superfamily. CcmA exporter (TC 3.A.1.107) family. The complex is composed of two ATP-binding proteins (CcmA) and two transmembrane proteins (CcmB).

The protein localises to the cell inner membrane. It catalyses the reaction heme b(in) + ATP + H2O = heme b(out) + ADP + phosphate + H(+). In terms of biological role, part of the ABC transporter complex CcmAB involved in the biogenesis of c-type cytochromes; once thought to export heme, this seems not to be the case, but its exact role is uncertain. Responsible for energy coupling to the transport system. The sequence is that of Cytochrome c biogenesis ATP-binding export protein CcmA from Brucella melitensis biotype 1 (strain ATCC 23456 / CCUG 17765 / NCTC 10094 / 16M).